A 65-amino-acid chain; its full sequence is Large ribosomal subunit protein uL29 (65 aa).

This sequence belongs to the universal ribosomal protein uL29 family.

The sequence is that of Large ribosomal subunit protein uL29 from Delftia acidovorans (strain DSM 14801 / SPH-1).